The primary structure comprises 296 residues: Probable 6-phosphogluconolactonase 1 (296 aa).

The protein belongs to the glucosamine/galactosamine-6-phosphate isomerase family. 6-phosphogluconolactonase subfamily.

The catalysed reaction is 6-phospho-D-glucono-1,5-lactone + H2O = 6-phospho-D-gluconate + H(+). Its pathway is carbohydrate degradation; pentose phosphate pathway; D-ribulose 5-phosphate from D-glucose 6-phosphate (oxidative stage): step 2/3. In terms of biological role, hydrolysis of 6-phosphogluconolactone to 6-phosphogluconate. The sequence is that of Probable 6-phosphogluconolactonase 1 from Oryza sativa subsp. japonica (Rice).